The following is a 387-amino-acid chain: Patatin-13 (387 aa).

The first 23 residues, 1-23, serve as a signal peptide directing secretion; that stretch reads MATTKSVLVLIFMILATTSSTFA. In terms of domain architecture, PNPLA spans 32-230; the sequence is LSVDGGGIKG…TVADPALLSV (199 aa). Positions 36-41 match the GXGXXG motif; sequence GGGIKG. The GXSXG motif lies at 75–79; the sequence is GTSTG. The active-site Nucleophile is Ser-77. Asn-115 and Asn-203 each carry an N-linked (GlcNAc...) asparagine glycan. Asp-216 (proton acceptor) is an active-site residue. The DGA/G signature appears at 216 to 218; it reads DGA. Residues 361-385 adopt a coiled-coil conformation; the sequence is ETYEEALKRFAKLLSDRKKLRANKA.

Belongs to the patatin family. As to expression, tuber.

The protein localises to the vacuole. Probable lipolytic acyl hydrolase (LAH), an activity which is thought to be involved in the response of tubers to pathogens. This Solanum tuberosum (Potato) protein is Patatin-13.